Here is a 180-residue protein sequence, read N- to C-terminus: Acireductone dioxygenase (180 aa).

Positions 97, 99, 103, and 141 each coordinate Fe(2+). His-97, His-99, Glu-103, and His-141 together coordinate Ni(2+).

Belongs to the acireductone dioxygenase (ARD) family. As to quaternary structure, monomer. It depends on Fe(2+) as a cofactor. Requires Ni(2+) as cofactor.

The enzyme catalyses 1,2-dihydroxy-5-(methylsulfanyl)pent-1-en-3-one + O2 = 3-(methylsulfanyl)propanoate + CO + formate + 2 H(+). It carries out the reaction 1,2-dihydroxy-5-(methylsulfanyl)pent-1-en-3-one + O2 = 4-methylsulfanyl-2-oxobutanoate + formate + 2 H(+). Its pathway is amino-acid biosynthesis; L-methionine biosynthesis via salvage pathway; L-methionine from S-methyl-5-thio-alpha-D-ribose 1-phosphate: step 5/6. In terms of biological role, catalyzes 2 different reactions between oxygen and the acireductone 1,2-dihydroxy-3-keto-5-methylthiopentene (DHK-MTPene) depending upon the metal bound in the active site. Fe-containing acireductone dioxygenase (Fe-ARD) produces formate and 2-keto-4-methylthiobutyrate (KMTB), the alpha-ketoacid precursor of methionine in the methionine recycle pathway. Ni-containing acireductone dioxygenase (Ni-ARD) produces methylthiopropionate, carbon monoxide and formate, and does not lie on the methionine recycle pathway. This Yersinia enterocolitica serotype O:8 / biotype 1B (strain NCTC 13174 / 8081) protein is Acireductone dioxygenase.